A 165-amino-acid polypeptide reads, in one-letter code: MRIDPSTLNLKEKVVHINRVAKVVKGGRNFRFSVLVVVGDEAGHVGVGTGKSIEIPEAIRKAIEDAKKNIVEVKTVGTTVPHDIIGKFGKGEVLIMTAKEGTGVIAGGPVRAVLELAGLKDVRAKSKGSNNPTNMVNATIDGLARLRTVEDIAKLRGKTVEEILG.

Residues 10–73 (LKEKVVHINR…EDAKKNIVEV (64 aa)) enclose the S5 DRBM domain.

The protein belongs to the universal ribosomal protein uS5 family. As to quaternary structure, part of the 30S ribosomal subunit. Contacts proteins S4 and S8.

Functionally, with S4 and S12 plays an important role in translational accuracy. In terms of biological role, located at the back of the 30S subunit body where it stabilizes the conformation of the head with respect to the body. This chain is Small ribosomal subunit protein uS5, found in Clostridium botulinum (strain ATCC 19397 / Type A).